The sequence spans 1206 residues: Cilia- and flagella-associated protein 157 (1206 aa).

Disordered stretches follow at residues 26-52 (GGGG…GRDL), 79-109 (RAEQ…QQAP), 125-173 (EATC…RGPL), and 327-405 (GSGK…EEDW). Low complexity-rich tracts occupy residues 88–109 (GRPQ…QQAP), 156–173 (AKAV…RGPL), and 385–397 (QQLG…QPGG). 3 coiled-coil regions span residues 634-732 (TDEL…KTKD), 799-833 (TEKL…LARR), and 876-903 (LHLA…KTAE). 3 disordered regions span residues 936–990 (TTTN…DELS), 1011–1072 (LSHG…GATS), and 1168–1206 (PWGK…SLKV). 2 stretches are compositionally biased toward low complexity: residues 951 to 973 (AGAD…SSSA) and 1014 to 1035 (GPLS…ALAG). Gly residues-rich tracts occupy residues 1037–1046 (WGPGSPGGSR) and 1058–1067 (SAGGMGGPQG). 2 stretches are compositionally biased toward polar residues: residues 1175–1184 (QQPLTTTKHS) and 1193–1206 (GPSN…SLKV).

Belongs to the CFAP157 family.

The protein localises to the cell projection. Its subcellular location is the cilium. It localises to the flagellum. The protein is Cilia- and flagella-associated protein 157 of Chlamydomonas reinhardtii (Chlamydomonas smithii).